Reading from the N-terminus, the 274-residue chain is NH(3)-dependent NAD(+) synthetase (274 aa).

46–53 (GISGGQDS) provides a ligand contact to ATP. D52 serves as a coordination point for Mg(2+). Position 140 (R140) interacts with deamido-NAD(+). Residue T160 coordinates ATP. E165 contacts Mg(2+). 2 residues coordinate deamido-NAD(+): K173 and D180. Residues K189 and T211 each coordinate ATP. 260 to 261 (HK) serves as a coordination point for deamido-NAD(+).

This sequence belongs to the NAD synthetase family. As to quaternary structure, homodimer.

The catalysed reaction is deamido-NAD(+) + NH4(+) + ATP = AMP + diphosphate + NAD(+) + H(+). It functions in the pathway cofactor biosynthesis; NAD(+) biosynthesis; NAD(+) from deamido-NAD(+) (ammonia route): step 1/1. Functionally, catalyzes the ATP-dependent amidation of deamido-NAD to form NAD. Uses ammonia as a nitrogen source. This chain is NH(3)-dependent NAD(+) synthetase, found in Streptococcus pyogenes serotype M3 (strain ATCC BAA-595 / MGAS315).